We begin with the raw amino-acid sequence, 294 residues long: Ribosomal protein L11 methyltransferase (294 aa).

S-adenosyl-L-methionine is bound by residues T144, G165, D187, and N229.

Belongs to the methyltransferase superfamily. PrmA family.

Its subcellular location is the cytoplasm. It carries out the reaction L-lysyl-[protein] + 3 S-adenosyl-L-methionine = N(6),N(6),N(6)-trimethyl-L-lysyl-[protein] + 3 S-adenosyl-L-homocysteine + 3 H(+). Methylates ribosomal protein L11. The sequence is that of Ribosomal protein L11 methyltransferase from Cellvibrio japonicus (strain Ueda107) (Pseudomonas fluorescens subsp. cellulosa).